The following is a 439-amino-acid chain: Paraneoplastic antigen-like protein 8A (439 aa).

The segment at 208-439 is disordered; that stretch reads SALKAETPNN…RRATNESRKV (232 aa). The segment covering 231-249 has biased composition (basic residues); sequence LVRRAGAKSRSRRKKQKKN. Basic and acidic residues-rich tracts occupy residues 314–326, 395–404, and 423–439; these read GPREPPQDARAEA, SRREASDQKA, and AKPEGSPRRATNESRKV.

The protein belongs to the PNMA family.

The polypeptide is Paraneoplastic antigen-like protein 8A (Homo sapiens (Human)).